The chain runs to 369 residues: Uroporphyrinogen decarboxylase (369 aa).

Residues 28–32 (RQAGR), aspartate 78, tyrosine 154, serine 209, and histidine 339 each bind substrate.

The protein belongs to the uroporphyrinogen decarboxylase family. As to quaternary structure, homodimer.

It localises to the cytoplasm. It catalyses the reaction uroporphyrinogen III + 4 H(+) = coproporphyrinogen III + 4 CO2. Its pathway is porphyrin-containing compound metabolism; protoporphyrin-IX biosynthesis; coproporphyrinogen-III from 5-aminolevulinate: step 4/4. Functionally, catalyzes the decarboxylation of four acetate groups of uroporphyrinogen-III to yield coproporphyrinogen-III. This is Uroporphyrinogen decarboxylase from Polaromonas sp. (strain JS666 / ATCC BAA-500).